The sequence spans 304 residues: Protein PagO (304 aa).

The next 10 membrane-spanning stretches (helical) occupy residues 4-24, 34-54, 67-87, 95-115, 119-139, 150-170, 180-200, 214-234, 246-266, and 267-287; these read VSIS…WLAM, VFAT…IAWL, LFQF…MIYG, LAAI…VLFL, AKLM…GILL, WQGI…YTQC, ITFN…TGWF, ILAT…CYFA, LVFL…YGYA, and ISTH…LTLV. EamA domains follow at residues 15–139 and 161–287; these read LTWG…GILL and LIHA…LTLV.

Belongs to the EamA transporter family.

The protein localises to the cell membrane. The protein is Protein PagO (pagO) of Salmonella typhimurium (strain LT2 / SGSC1412 / ATCC 700720).